Consider the following 406-residue polypeptide: Tubby-like F-box protein 3 (406 aa).

The 56-residue stretch at 50–105 folds into the F-box domain; it reads SCWASMPPELLRDVLMRIEQSEDTWPSRKNVVSCAGVCRNWREIVKEIVRVPELSS.

The protein belongs to the TUB family. Ubiquitous at low levels. Not detected in mature siliques.

Its subcellular location is the cell membrane. The protein localises to the plastid. It is found in the nucleus. It localises to the nucleoplasm. The protein resides in the cytoplasm. Its function is as follows. Involved in abiotic stress signaling. Tethered to plasma membrane (PM) and probably bound to phosphatidylinositol 4,5-bisphosphate. Abiotic stresses (drought, salt, H(2)O(2)) trigger phospholipase C mediated PM dislogement and plastidial and nucleocytosolic relocation of TULP3. In Arabidopsis thaliana (Mouse-ear cress), this protein is Tubby-like F-box protein 3.